Here is a 96-residue protein sequence, read N- to C-terminus: MCPRTVLLIININHWFYDKNIVRIILTFRLDSGHISDICFINKNLANALITADISLLKRHDIRCTKYIITYYQRYRNKEKGKFISLCKNTIISSSV.

This is an uncharacterized protein from Saccharomyces cerevisiae (strain ATCC 204508 / S288c) (Baker's yeast).